Here is a 255-residue protein sequence, read N- to C-terminus: Imidazole glycerol phosphate synthase subunit HisF (255 aa).

Catalysis depends on residues Asp11 and Asp130.

The protein belongs to the HisA/HisF family. As to quaternary structure, heterodimer of HisH and HisF.

It is found in the cytoplasm. The catalysed reaction is 5-[(5-phospho-1-deoxy-D-ribulos-1-ylimino)methylamino]-1-(5-phospho-beta-D-ribosyl)imidazole-4-carboxamide + L-glutamine = D-erythro-1-(imidazol-4-yl)glycerol 3-phosphate + 5-amino-1-(5-phospho-beta-D-ribosyl)imidazole-4-carboxamide + L-glutamate + H(+). The protein operates within amino-acid biosynthesis; L-histidine biosynthesis; L-histidine from 5-phospho-alpha-D-ribose 1-diphosphate: step 5/9. In terms of biological role, IGPS catalyzes the conversion of PRFAR and glutamine to IGP, AICAR and glutamate. The HisF subunit catalyzes the cyclization activity that produces IGP and AICAR from PRFAR using the ammonia provided by the HisH subunit. In Campylobacter lari (strain RM2100 / D67 / ATCC BAA-1060), this protein is Imidazole glycerol phosphate synthase subunit HisF.